The sequence spans 159 residues: Peptide methionine sulfoxide reductase MsrB (159 aa).

The 123-residue stretch at 22–144 (RERLEANLTA…NSVSLQFVKA (123 aa)) folds into the MsrB domain. Zn(2+) is bound by residues cysteine 61, cysteine 64, cysteine 110, and cysteine 113. Residue cysteine 133 is the Nucleophile of the active site.

It belongs to the MsrB Met sulfoxide reductase family. The cofactor is Zn(2+).

It catalyses the reaction L-methionyl-[protein] + [thioredoxin]-disulfide + H2O = L-methionyl-(R)-S-oxide-[protein] + [thioredoxin]-dithiol. The polypeptide is Peptide methionine sulfoxide reductase MsrB (Caulobacter vibrioides (strain ATCC 19089 / CIP 103742 / CB 15) (Caulobacter crescentus)).